A 422-amino-acid chain; its full sequence is MEPCSCDTFVALPPATIDNRIIFGKNSDRPCDEVQEVVYFPAAVHDNLKEHLKCTYIEIDQVPETYAVVLSRPAWLWGAEMGANEHGVCIGNEAVWGREKVCDEEALLGMDLVRLGLERGDTAEKALNVIVDLLEKYGQGGNCSEGRMVFSYHNSFLIADRNEAWILETAGKYWAAEKVEEGVRNISNQLSIMTKIDREHPDMRNYAKQRGWWDGKKEFDFAATYSYLDTAKMMISPGRYCEGYKLLNKHKGNITFETMVEILRDKPSGINMEGEFLTTASMVSILPQDSKLPCIHFFTGTPDPERSVFKPFIFVPNISQLLNTSSPTFELEDSVGKKLQFNSKPDRRHPLYQKHQQALEILDNKTEKAKTMLDNMRKLEKELFKEMESVLQNKHLQVDKIVNLLHQCTEDEIRIYKSNVSS.

Residues 1-5 (MEPCS) constitute a propeptide that is removed on maturation. Residue Cys-6 is part of the active site. Position 6 is a glyoxylic acid (Cys); alternate (Cys-6). Position 6 is a pyruvic acid (Cys); alternate (Cys-6).

Belongs to the peptidase C69 family. Secernin subfamily.

Plays a role in thermal nociception. The chain is Secernin-3 (SCRN3) from Bos taurus (Bovine).